The following is a 122-amino-acid chain: Large ribosomal subunit protein uL14 (122 aa).

It belongs to the universal ribosomal protein uL14 family. Part of the 50S ribosomal subunit. Forms a cluster with proteins L3 and L19. In the 70S ribosome, L14 and L19 interact and together make contacts with the 16S rRNA in bridges B5 and B8.

In terms of biological role, binds to 23S rRNA. Forms part of two intersubunit bridges in the 70S ribosome. This is Large ribosomal subunit protein uL14 from Limosilactobacillus reuteri (strain DSM 20016) (Lactobacillus reuteri).